Here is a 115-residue protein sequence, read N- to C-terminus: Autophagy-related protein 8i (115 aa).

Glycine 115 carries Phosphatidylethanolamine amidated glycine lipidation.

It belongs to the ATG8 family. As to quaternary structure, interacts with ATG4. Interacts with NBR1. Gly-115 forms then a thioester bond with the 'Cys-558' of ATG7 (E1-like activating enzyme) before being transferred to the 'Cys-258' of ATG3 (the specific E2 conjugating enzyme), in order to be finally amidated with phosphatidylethanolamine. This lipid modification anchors ATG8 to autophagosomes. Constitutively expressed.

It is found in the cytoplasmic vesicle. Its subcellular location is the autophagosome membrane. The protein localises to the vacuole membrane. It localises to the cytoplasm. The protein resides in the cytoskeleton. Functionally, ubiquitin-like modifier involved in autophagosomes formation. May mediate the delivery of the autophagosomes to the vacuole via the microtubule cytoskeleton. The chain is Autophagy-related protein 8i (ATG8I) from Arabidopsis thaliana (Mouse-ear cress).